We begin with the raw amino-acid sequence, 193 residues long: Ion-translocating oxidoreductase complex subunit A (193 aa).

Helical transmembrane passes span 5–25 (LLLF…FLGL), 39–59 (MGMG…AWLI), 63–83 (ILIP…VIAV), 102–122 (LLGI…VALL), 134–154 (ALYG…FAAI), and 171–191 (AIAL…NGLV).

It belongs to the NqrDE/RnfAE family. As to quaternary structure, the complex is composed of six subunits: RsxA, RsxB, RsxC, RsxD, RsxE and RsxG.

It is found in the cell inner membrane. Part of a membrane-bound complex that couples electron transfer with translocation of ions across the membrane. Required to maintain the reduced state of SoxR. The sequence is that of Ion-translocating oxidoreductase complex subunit A from Shigella sonnei (strain Ss046).